The following is a 49-amino-acid chain: Large ribosomal subunit protein bL33B (49 aa).

It belongs to the bacterial ribosomal protein bL33 family.

The sequence is that of Large ribosomal subunit protein bL33B (rpmG2) from Lactococcus lactis subsp. lactis (strain IL1403) (Streptococcus lactis).